Here is a 247-residue protein sequence, read N- to C-terminus: Cell division protein ZapD (247 aa).

Belongs to the ZapD family. In terms of assembly, interacts with FtsZ.

Its subcellular location is the cytoplasm. Functionally, cell division factor that enhances FtsZ-ring assembly. Directly interacts with FtsZ and promotes bundling of FtsZ protofilaments, with a reduction in FtsZ GTPase activity. The polypeptide is Cell division protein ZapD (Shigella dysenteriae serotype 1 (strain Sd197)).